The sequence spans 179 residues: Endoribonuclease YbeY (179 aa).

Histidine 141, histidine 145, and histidine 151 together coordinate Zn(2+).

This sequence belongs to the endoribonuclease YbeY family. The cofactor is Zn(2+).

It localises to the cytoplasm. Functionally, single strand-specific metallo-endoribonuclease involved in late-stage 70S ribosome quality control and in maturation of the 3' terminus of the 16S rRNA. This chain is Endoribonuclease YbeY, found in Synechocystis sp. (strain ATCC 27184 / PCC 6803 / Kazusa).